We begin with the raw amino-acid sequence, 361 residues long: Phosphoserine aminotransferase (361 aa).

Arg-43 contacts L-glutamate. Residues 77–78 (AS), Trp-103, Thr-153, Asp-173, and Gln-196 contribute to the pyridoxal 5'-phosphate site. Residue Lys-197 is modified to N6-(pyridoxal phosphate)lysine. 238-239 (NT) contributes to the pyridoxal 5'-phosphate binding site.

The protein belongs to the class-V pyridoxal-phosphate-dependent aminotransferase family. SerC subfamily. In terms of assembly, homodimer. The cofactor is pyridoxal 5'-phosphate.

The protein resides in the cytoplasm. The catalysed reaction is O-phospho-L-serine + 2-oxoglutarate = 3-phosphooxypyruvate + L-glutamate. The enzyme catalyses 4-(phosphooxy)-L-threonine + 2-oxoglutarate = (R)-3-hydroxy-2-oxo-4-phosphooxybutanoate + L-glutamate. It functions in the pathway amino-acid biosynthesis; L-serine biosynthesis; L-serine from 3-phospho-D-glycerate: step 2/3. It participates in cofactor biosynthesis; pyridoxine 5'-phosphate biosynthesis; pyridoxine 5'-phosphate from D-erythrose 4-phosphate: step 3/5. In terms of biological role, catalyzes the reversible conversion of 3-phosphohydroxypyruvate to phosphoserine and of 3-hydroxy-2-oxo-4-phosphonooxybutanoate to phosphohydroxythreonine. The polypeptide is Phosphoserine aminotransferase (Pseudomonas aeruginosa (strain LESB58)).